The sequence spans 131 residues: Neo-calmodulin (131 aa).

EF-hand domains are found at residues 1–32 (EFKE…LGQN), 33–68 (PTEA…KMKD), 70–105 (DSEE…LGEK), and 106–131 (LTDE…YEEF). Ca(2+)-binding residues include Asp10, Asp12, Asp14, Thr16, Glu21, Asp46, Asp48, Asn50, Thr52, Glu57, Asp83, Asp85, Asn87, Tyr89, Glu94, Asp119, Asp121, Asp123, Gln125, and Glu130.

This sequence belongs to the calmodulin family.

The polypeptide is Neo-calmodulin (Gallus gallus (Chicken)).